We begin with the raw amino-acid sequence, 161 residues long: Large ribosomal subunit protein uL11 (161 aa).

Belongs to the universal ribosomal protein uL11 family. As to quaternary structure, part of the ribosomal stalk of the 50S ribosomal subunit. Interacts with L10 and the large rRNA to form the base of the stalk. L10 forms an elongated spine to which L12 dimers bind in a sequential fashion forming a multimeric L10(L12)X complex.

In terms of biological role, forms part of the ribosomal stalk which helps the ribosome interact with GTP-bound translation factors. The polypeptide is Large ribosomal subunit protein uL11 (Methanocaldococcus jannaschii (strain ATCC 43067 / DSM 2661 / JAL-1 / JCM 10045 / NBRC 100440) (Methanococcus jannaschii)).